A 1033-amino-acid chain; its full sequence is Tyrosine-protein kinase-like otk (1033 aa).

Positions 1–22 (MTARMISIYGLVLASMMASVWA) are cleaved as a signal peptide. The Extracellular segment spans residues 23–581 (SSSRFQRLPQ…GGDGFLVTRA (559 aa)). Ig-like C2-type domains are found at residues 25 to 108 (SRFQ…REAS), 109 to 199 (PPAK…RVMS), 251 to 365 (PEDL…LPIS), 368 to 463 (PGVL…VAIN), and 468 to 558 (PKFS…VQLV). N-linked (GlcNAc...) asparagine glycosylation occurs at N39. Disulfide bonds link C46–C95, C137–C188, C276–C354, and C399–C447. Residues N336, N417, N429, N444, N457, N512, and N524 are each glycosylated (N-linked (GlcNAc...) asparagine). C490 and C542 form a disulfide bridge. Residues 582–602 (VLITMTVALAYIVLVVGLMLW) traverse the membrane as a helical segment. Residues 603-1033 (CRYRRQARKA…LSKAMQSVEK (431 aa)) lie on the Cytoplasmic side of the membrane. Disordered regions lie at residues 617–679 (LSTK…KKSA) and 718–760 (SPTD…KTSM). Residues 655–673 (KSSGDAQKSDDTACSQQSR) show a composition bias toward polar residues. Position 678 is a phosphoserine (S678). A Protein kinase; inactive domain is found at 692–1028 (LSELIQIGRG…QLGAALSKAM (337 aa)). The segment covering 720–731 (TDKDADTEKQHS) has biased composition (basic and acidic residues).

Belongs to the protein kinase superfamily. Tyr protein kinase family. Insulin receptor subfamily. Interacts with plexA; component of a receptor complex that mediates the repulsive signaling in response to Semaphorin ligands.

It is found in the cell membrane. Acts as a calcium-dependent, homophilic cell adhesion molecule that regulates neural recognition during the development of the nervous system. Component of the repulsive Plexin signaling response to regulate motor axon guidance at the embryonic stage. Also component of a receptor complex that is required in the adult visual system to innervate the lamina layer; specific targeting of R1-R6 axons. The chain is Tyrosine-protein kinase-like otk from Drosophila erecta (Fruit fly).